The sequence spans 1061 residues: E3 ubiquitin-protein ligase Smurf1 (1061 aa).

The region spanning 1-116 (MNKLDYPRRN…KGAGFQRLDL (116 aa)) is the C2 domain. Disordered stretches follow at residues 143–176 (SGNPLAIVGPSGDVRGPSEDDSSEDSLPEGWEER) and 188–496 (HATK…SGQR). A WW 1 domain is found at 167 to 200 (DSLPEGWEERRTDNGRVYYVNHATKSTQWDRPRQ). 2 stretches are compositionally biased toward polar residues: residues 207–225 (SHATSPQQRHNTHNGNSGD) and 233–255 (TRSTTCTNLMNNGHRSRDLSVTA). At Ser262 the chain carries Phosphoserine. Residues 264-273 (EILSSVGKEN) are compositionally biased toward polar residues. Low complexity-rich tracts occupy residues 274 to 300 (TSPTTPVSATTTPGKKTSSSNSSSAGG) and 311 to 322 (PATPTSSTTSAS). Over residues 348-359 (TPTSPTGQQNYV) the composition is skewed to polar residues. The segment covering 360–378 (NGNAQNGSTSGNGSGQAAQ) has biased composition (low complexity). The span at 379–392 (PQSASNGWTQEDAA) shows a compositional bias: polar residues. The segment covering 393-409 (TTTSPSTTTSPPRHSQS) has biased composition (low complexity). Thr412 bears the Phosphothreonine mark. Ser416 carries the phosphoserine modification. The span at 417-439 (PPASVTPSANGNVHSPNANSTPA) shows a compositional bias: polar residues. Positions 480-494 (RNGGTSGGGGGGGSG) are enriched in gly residues. WW domains are found at residues 513–546 (LDLPPGYEMRTTQQGQVYFYHIPTGVSTWHDPRI) and 561–594 (GPLPSGWEQRKTASGRVYFVDHNNRTTQFTDPRL). The segment at 513 to 602 (LDLPPGYEMR…RLSGSILQMI (90 aa)) is interaction with MAD. 2 stretches are compositionally biased toward low complexity: residues 608-617 (PPTSAANAGT) and 624-656 (TPATPSAAAAVPPQATPASNATPTTLTTTTNPP). The tract at residues 608 to 661 (PPTSAANAGTPAPPSATPATPSAAAAVPPQATPASNATPTTLTTTTNPPHRIVP) is disordered. Residues 723–1061 (RAKDMRKRLM…VEETCGFAVE (339 aa)) form the HECT domain. The active-site Glycyl thioester intermediate is the Cys1029.

Interacts with phosphorylated MAD.

The catalysed reaction is S-ubiquitinyl-[E2 ubiquitin-conjugating enzyme]-L-cysteine + [acceptor protein]-L-lysine = [E2 ubiquitin-conjugating enzyme]-L-cysteine + N(6)-ubiquitinyl-[acceptor protein]-L-lysine.. The protein operates within protein modification; protein ubiquitination. E3 ubiquitin-protein ligase which accepts ubiquitin from an E2 ubiquitin-conjugating enzyme in the form of a thioester and then directly transfers the ubiquitin to targeted substrates. Down-regulates Dpp signaling after gastrulation by promoting MAD ubiquitination and subsequent degradation. In Drosophila melanogaster (Fruit fly), this protein is E3 ubiquitin-protein ligase Smurf1.